The following is a 294-amino-acid chain: Nucleotide-binding protein NT01CX_1284 (294 aa).

8 to 15 (GLSGAGKS) is a binding site for ATP. 59–62 (DIRG) contacts GTP.

It belongs to the RapZ-like family.

Functionally, displays ATPase and GTPase activities. This Clostridium novyi (strain NT) protein is Nucleotide-binding protein NT01CX_1284.